A 68-amino-acid chain; its full sequence is Large ribosomal subunit protein uL29 (68 aa).

Belongs to the universal ribosomal protein uL29 family.

The polypeptide is Large ribosomal subunit protein uL29 (Streptococcus uberis (strain ATCC BAA-854 / 0140J)).